The following is a 305-amino-acid chain: HPr kinase/phosphorylase (305 aa).

Catalysis depends on residues His-138 and Lys-159. 153–160 (GESGIGKS) is an ATP binding site. Ser-160 provides a ligand contact to Mg(2+). Catalysis depends on Asp-177, which acts as the Proton acceptor; for phosphorylation activity. Proton donor; for dephosphorylation activity. The interval 201-210 (IEIRGIGILD) is important for the catalytic mechanism of both phosphorylation and dephosphorylation. Glu-202 is a Mg(2+) binding site. The active site involves Arg-243. An important for the catalytic mechanism of dephosphorylation region spans residues 264-269 (PVRPGR).

The protein belongs to the HPrK/P family. As to quaternary structure, homohexamer. Requires Mg(2+) as cofactor.

It catalyses the reaction [HPr protein]-L-serine + ATP = [HPr protein]-O-phospho-L-serine + ADP + H(+). The catalysed reaction is [HPr protein]-O-phospho-L-serine + phosphate + H(+) = [HPr protein]-L-serine + diphosphate. Catalyzes the ATP- as well as the pyrophosphate-dependent phosphorylation of a specific serine residue in HPr, a phosphocarrier protein of the phosphoenolpyruvate-dependent sugar phosphotransferase system (PTS). HprK/P also catalyzes the pyrophosphate-producing, inorganic phosphate-dependent dephosphorylation (phosphorolysis) of seryl-phosphorylated HPr (P-Ser-HPr). The two antagonistic activities of HprK/P are regulated by several intracellular metabolites, which change their concentration in response to the absence or presence of rapidly metabolisable carbon sources (glucose, fructose, etc.) in the growth medium. Therefore, by controlling the phosphorylation state of HPr, HPrK/P is a sensor enzyme that plays a major role in the regulation of carbon metabolism and sugar transport: it mediates carbon catabolite repression (CCR), and regulates PTS-catalyzed carbohydrate uptake and inducer exclusion. This Caldanaerobacter subterraneus subsp. tengcongensis (strain DSM 15242 / JCM 11007 / NBRC 100824 / MB4) (Thermoanaerobacter tengcongensis) protein is HPr kinase/phosphorylase.